We begin with the raw amino-acid sequence, 483 residues long: Aspartyl/glutamyl-tRNA(Asn/Gln) amidotransferase subunit B (483 aa).

It belongs to the GatB/GatE family. GatB subfamily. As to quaternary structure, heterotrimer of A, B and C subunits.

The catalysed reaction is L-glutamyl-tRNA(Gln) + L-glutamine + ATP + H2O = L-glutaminyl-tRNA(Gln) + L-glutamate + ADP + phosphate + H(+). The enzyme catalyses L-aspartyl-tRNA(Asn) + L-glutamine + ATP + H2O = L-asparaginyl-tRNA(Asn) + L-glutamate + ADP + phosphate + 2 H(+). Its function is as follows. Allows the formation of correctly charged Asn-tRNA(Asn) or Gln-tRNA(Gln) through the transamidation of misacylated Asp-tRNA(Asn) or Glu-tRNA(Gln) in organisms which lack either or both of asparaginyl-tRNA or glutaminyl-tRNA synthetases. The reaction takes place in the presence of glutamine and ATP through an activated phospho-Asp-tRNA(Asn) or phospho-Glu-tRNA(Gln). This chain is Aspartyl/glutamyl-tRNA(Asn/Gln) amidotransferase subunit B, found in Granulibacter bethesdensis (strain ATCC BAA-1260 / CGDNIH1).